We begin with the raw amino-acid sequence, 183 residues long: UPF0397 protein EAT1b_2102 (183 aa).

A run of 5 helical transmembrane segments spans residues Ile9 to Pro29, Ala42 to Ile62, Ser74 to Ala94, Ala117 to Ala137, and Gly147 to Val167.

The protein belongs to the UPF0397 family.

It localises to the cell membrane. The polypeptide is UPF0397 protein EAT1b_2102 (Exiguobacterium sp. (strain ATCC BAA-1283 / AT1b)).